A 160-amino-acid polypeptide reads, in one-letter code: Large ribosomal subunit protein uL22c (160 aa).

It belongs to the universal ribosomal protein uL22 family. Part of the 50S ribosomal subunit.

Its subcellular location is the plastid. The protein resides in the chloroplast. In terms of biological role, this protein binds specifically to 23S rRNA. The globular domain of the protein is located near the polypeptide exit tunnel on the outside of the subunit, while an extended beta-hairpin is found that lines the wall of the exit tunnel in the center of the 70S ribosome. This chain is Large ribosomal subunit protein uL22c (rpl22), found in Crucihimalaya wallichii (Rock-cress).